The primary structure comprises 149 residues: MKWIDLKRSKIKVYGKPVKMLMKGLTAPEEHTHFLHGLLTNDIKSLKPYTFNYNLWLKQNGQPIADFFVYKIKDYYILDTEEPADFVINEFNRLKLSLKVYFEDLTPNYKHVFIYGEGAEEFVKEKFGVELSDYEIKELKEELTLRKIL.

This is an uncharacterized protein from Aquifex aeolicus (strain VF5).